The chain runs to 242 residues: uncharacterized protein (242 aa).

One can recognise a Response regulatory domain in the interval 3 to 116; the sequence is TALVIDDEQF…RLNKTVKRLN (114 aa). The residue at position 54 (Asp54) is a 4-aspartylphosphate. The region spanning 139–240 is the HTH LytTR-type domain; sequence IPCIGHNRIV…LKVLKEMLGI (102 aa).

This is an uncharacterized protein from Vibrio parahaemolyticus serotype O3:K6 (strain RIMD 2210633).